A 341-amino-acid chain; its full sequence is MQSQNTPAAGRYPAGGLAFPHRDLTGIGQLARHEILYLLDEAEQWVELNRQSQKTTDLLNGLTIINAFFENSTRTLLSFEIAGKRLGADVVNMHAATSSVKKGETLIDTAMTLNAMRADAIVIRHASSGAVRLIAEKVDCPVLNAGDGQHEHPTQALLDALTMRHAMKLPAGSDLNGLKVTICGDILHSRVARSNILSLTALGAEVRVCAPPALMPAEIEAMGVTPFHDFDAALKGANIVMMLRLQQERMSGQFIPSPREYRHLYGLTPERLARAEADAFVMHPGPMNRGIEIDSTVADHPTRSLITRQVEMGVAIRMACLEVLTRRARRTPGWEAEGASA.

The carbamoyl phosphate site is built by Arg74 and Thr75. Position 102 (Lys102) interacts with L-aspartate. Carbamoyl phosphate-binding residues include Arg124, His152, and Gln155. L-aspartate-binding residues include Arg190 and Arg244. Carbamoyl phosphate is bound by residues Gly285 and Pro286.

Belongs to the aspartate/ornithine carbamoyltransferase superfamily. ATCase family. As to quaternary structure, heterododecamer (2C3:3R2) of six catalytic PyrB chains organized as two trimers (C3), and six regulatory PyrI chains organized as three dimers (R2).

It catalyses the reaction carbamoyl phosphate + L-aspartate = N-carbamoyl-L-aspartate + phosphate + H(+). It functions in the pathway pyrimidine metabolism; UMP biosynthesis via de novo pathway; (S)-dihydroorotate from bicarbonate: step 2/3. Catalyzes the condensation of carbamoyl phosphate and aspartate to form carbamoyl aspartate and inorganic phosphate, the committed step in the de novo pyrimidine nucleotide biosynthesis pathway. The chain is Aspartate carbamoyltransferase catalytic subunit from Novosphingobium aromaticivorans (strain ATCC 700278 / DSM 12444 / CCUG 56034 / CIP 105152 / NBRC 16084 / F199).